A 386-amino-acid chain; its full sequence is Chaperone protein DnaJ (386 aa).

The J domain occupies 3–68; sequence DYYEILEVAR…KKRQVYDRYG (66 aa). Residues 146 to 224 form a CR-type zinc finger; that stretch reads GVDKELVISN…CKGQGAVKEK (79 aa). Cysteine 159, cysteine 162, cysteine 176, cysteine 179, cysteine 198, cysteine 201, cysteine 212, and cysteine 215 together coordinate Zn(2+). CXXCXGXG motif repeat units follow at residues 159–166, 176–183, 198–205, and 212–219; these read CNVCNGKG, CSECKGRG, CPKCHGEG, and CKNCKGQG.

Belongs to the DnaJ family. In terms of assembly, homodimer. The cofactor is Zn(2+).

Its subcellular location is the cytoplasm. In terms of biological role, participates actively in the response to hyperosmotic and heat shock by preventing the aggregation of stress-denatured proteins and by disaggregating proteins, also in an autonomous, DnaK-independent fashion. Unfolded proteins bind initially to DnaJ; upon interaction with the DnaJ-bound protein, DnaK hydrolyzes its bound ATP, resulting in the formation of a stable complex. GrpE releases ADP from DnaK; ATP binding to DnaK triggers the release of the substrate protein, thus completing the reaction cycle. Several rounds of ATP-dependent interactions between DnaJ, DnaK and GrpE are required for fully efficient folding. Also involved, together with DnaK and GrpE, in the DNA replication of plasmids through activation of initiation proteins. This chain is Chaperone protein DnaJ, found in Protochlamydia amoebophila (strain UWE25).